Consider the following 37-residue polypeptide: Mu-agatoxin-Aa1b (37 aa).

Intrachain disulfides connect cysteine 2–cysteine 18, cysteine 9–cysteine 23, cysteine 17–cysteine 33, and cysteine 25–cysteine 31. Serine 37 carries the post-translational modification Serine amide.

This sequence belongs to the neurotoxin 07 (Beta/delta-agtx) family. 01 (aga-2) subfamily. In terms of tissue distribution, expressed by the venom gland.

The protein resides in the secreted. Functionally, insecticidal neurotoxin that induces an irreversible spastic paralysis when injected into insects. Modifies presynaptic voltage-gated sodium channels (Nav), causing them to open at the normal resting potential of the nerve. This leads to spontaneous release of neurotransmitter and repetitive action potentials in motor neurons. This chain is Mu-agatoxin-Aa1b, found in Agelenopsis aperta (North American funnel-web spider).